A 130-amino-acid chain; its full sequence is Small ribosomal subunit protein uS11c (130 aa).

This sequence belongs to the universal ribosomal protein uS11 family. In terms of assembly, part of the 30S ribosomal subunit.

Its subcellular location is the plastid. It is found in the cyanelle. This Cyanophora paradoxa protein is Small ribosomal subunit protein uS11c.